A 287-amino-acid chain; its full sequence is tRNA selenocysteine 1-associated protein 1 (287 aa).

RRM domains are found at residues 3–86 and 96–175; these read ASLW…YVTY and YSLF…VAIP.

This sequence belongs to the RRM TRSPAP family. Component of the tRNA(Sec) complex composed at least of EEFSEC, SECISBP2, SEPHS1, SEPSECS, TRNAU1AP and tRNA(Sec). Found in a complex with tRNA(Sec). Interacts with SEPSECS. Associates with mRNP and/or polysomes. Found in a complex with EEFSEC, SECISBP2, TRNAU1AP and tRNA(Sec).

It is found in the nucleus. The protein localises to the cytoplasm. Functionally, involved in the early steps of selenocysteine biosynthesis and tRNA(Sec) charging to the later steps resulting in the cotranslational incorporation of selenocysteine into selenoproteins. Stabilizes the SECISBP2, EEFSEC and tRNA(Sec) complex. May be involved in the methylation of tRNA(Sec). Enhances efficiency of selenoproteins synthesis. The polypeptide is tRNA selenocysteine 1-associated protein 1 (TRNAU1AP) (Pongo abelii (Sumatran orangutan)).